The chain runs to 367 residues: Phosphoribosylaminoimidazole-succinocarboxamide synthase (367 aa).

Belongs to the SAICAR synthetase family.

The catalysed reaction is 5-amino-1-(5-phospho-D-ribosyl)imidazole-4-carboxylate + L-aspartate + ATP = (2S)-2-[5-amino-1-(5-phospho-beta-D-ribosyl)imidazole-4-carboxamido]succinate + ADP + phosphate + 2 H(+). It participates in purine metabolism; IMP biosynthesis via de novo pathway; 5-amino-1-(5-phospho-D-ribosyl)imidazole-4-carboxamide from 5-amino-1-(5-phospho-D-ribosyl)imidazole-4-carboxylate: step 1/2. The polypeptide is Phosphoribosylaminoimidazole-succinocarboxamide synthase (Shewanella baltica (strain OS223)).